A 259-amino-acid polypeptide reads, in one-letter code: Phosphate import ATP-binding protein PstB 1 (259 aa).

In terms of domain architecture, ABC transporter spans 7–254 (VKPEDVYQIN…PDDHRTKDYI (248 aa)). An ATP-binding site is contributed by 45–52 (GPSGCGKS).

The protein belongs to the ABC transporter superfamily. Phosphate importer (TC 3.A.1.7) family. The complex is composed of two ATP-binding proteins (PstB), two transmembrane proteins (PstC and PstA) and a solute-binding protein (PstS).

It is found in the cell membrane. It carries out the reaction phosphate(out) + ATP + H2O = ADP + 2 phosphate(in) + H(+). Part of the ABC transporter complex PstSACB involved in phosphate import. Responsible for energy coupling to the transport system. This chain is Phosphate import ATP-binding protein PstB 1, found in Bacillus licheniformis (strain ATCC 14580 / DSM 13 / JCM 2505 / CCUG 7422 / NBRC 12200 / NCIMB 9375 / NCTC 10341 / NRRL NRS-1264 / Gibson 46).